The following is a 729-amino-acid chain: Polyribonucleotide nucleotidyltransferase (729 aa).

2 residues coordinate Mg(2+): Asp-509 and Asp-515. Residues Pro-575–Ile-634 form the KH domain. The S1 motif domain maps to Gly-646–Ser-718.

It belongs to the polyribonucleotide nucleotidyltransferase family. Mg(2+) is required as a cofactor.

The protein localises to the cytoplasm. The catalysed reaction is RNA(n+1) + phosphate = RNA(n) + a ribonucleoside 5'-diphosphate. In terms of biological role, involved in mRNA degradation. Catalyzes the phosphorolysis of single-stranded polyribonucleotides processively in the 3'- to 5'-direction. In Frankia casuarinae (strain DSM 45818 / CECT 9043 / HFP020203 / CcI3), this protein is Polyribonucleotide nucleotidyltransferase.